We begin with the raw amino-acid sequence, 170 residues long: Adenine phosphoribosyltransferase (170 aa).

It belongs to the purine/pyrimidine phosphoribosyltransferase family. In terms of assembly, homodimer.

It is found in the cytoplasm. It catalyses the reaction AMP + diphosphate = 5-phospho-alpha-D-ribose 1-diphosphate + adenine. The protein operates within purine metabolism; AMP biosynthesis via salvage pathway; AMP from adenine: step 1/1. Functionally, catalyzes a salvage reaction resulting in the formation of AMP, that is energically less costly than de novo synthesis. The chain is Adenine phosphoribosyltransferase from Bacillus anthracis (strain A0248).